The sequence spans 303 residues: Sporulation regulatory protein (303 aa).

The FtsK domain maps to 26 to 213 (TGRLRAGLRK…HRVNDKQTAE (188 aa)). ATP is bound at residue 43-50 (GANHSGKS).

Functionally, involved in sporulation inhibition and pock formation. The chain is Sporulation regulatory protein (spi) from Streptomyces azureus.